Here is a 361-residue protein sequence, read N- to C-terminus: Peptide chain release factor 1 (361 aa).

Residue Q237 is modified to N5-methylglutamine. Over residues 284–296 the composition is skewed to basic and acidic residues; sequence EDEKRRSEEDSTR. The segment at 284 to 305 is disordered; the sequence is EDEKRRSEEDSTRRNLVSSGDR.

The protein belongs to the prokaryotic/mitochondrial release factor family. Methylated by PrmC. Methylation increases the termination efficiency of RF1.

The protein resides in the cytoplasm. Peptide chain release factor 1 directs the termination of translation in response to the peptide chain termination codons UAG and UAA. The polypeptide is Peptide chain release factor 1 (Shewanella piezotolerans (strain WP3 / JCM 13877)).